A 295-amino-acid chain; its full sequence is Glycine N-phenylacetyltransferase (295 aa).

An N6-acetyllysine modification is found at lysine 43. Lysine 48 is modified (N6-acetyllysine; alternate). N6-succinyllysine; alternate is present on lysine 48. The residue at position 80 (lysine 80) is an N6-acetyllysine. Lysine 182 carries the N6-acetyllysine; alternate modification. An N6-succinyllysine; alternate modification is found at lysine 182.

It belongs to the glycine N-acyltransferase family.

The protein resides in the mitochondrion. The enzyme catalyses phenylacetyl-CoA + glycine = phenylacetylglycine + CoA + H(+). In terms of biological role, mitochondrial acyltransferase which transfers the acyl group to the N-terminus of glycine. Can conjugate a multitude of substrates to form a variety of N-acylglycines. Catalyzes the conjugation of arylacetic acids with glycine but does not have activity towards any alkyl-CoA. This chain is Glycine N-phenylacetyltransferase, found in Bos taurus (Bovine).